A 404-amino-acid chain; its full sequence is MDYSEIMVRHGELSTKGKNRMRFINKLKNNIQDVLAPFPAITVRSDRDRTHVSLNGTDYQPIVEALKLVFGVQALSPVYKLEKSVPLLVTAVQDIMTSLYRDGLTFKIATKRSDHAFELDSRELNSLLGGAVFEVLPNIQAQMKHPDVTLKVEIRDEAAYISYEEIKGAGGLPVGTSGKGMLMLSGGIDSPVAGYLALKRGLDIEVVHFASPPYTSPGALAKAQDLTRRLTRFGGNIQFIEVPFTEIQEEIKNKAPEAYLMTLTRRFMMRITDAIREQRKGLVIVNGESLGQVASQTLESMQAINAVTSTPIIRPVVTMDKLEIIEMAQAIDTFDISIQPFEDCCTIFAPDRPKTNPKLGNAEKYEERFDIDGLVQRAVSGIVVTEITPEIVNDEVENLIDALL.

One can recognise a THUMP domain in the interval 60–165 (QPIVEALKLV…DEAAYISYEE (106 aa)). Residues 183–184 (ML), 208–209 (HF), Arg-265, Gly-287, and Gln-296 contribute to the ATP site.

It belongs to the ThiI family.

Its subcellular location is the cytoplasm. The enzyme catalyses [ThiI sulfur-carrier protein]-S-sulfanyl-L-cysteine + a uridine in tRNA + 2 reduced [2Fe-2S]-[ferredoxin] + ATP + H(+) = [ThiI sulfur-carrier protein]-L-cysteine + a 4-thiouridine in tRNA + 2 oxidized [2Fe-2S]-[ferredoxin] + AMP + diphosphate. The catalysed reaction is [ThiS sulfur-carrier protein]-C-terminal Gly-Gly-AMP + S-sulfanyl-L-cysteinyl-[cysteine desulfurase] + AH2 = [ThiS sulfur-carrier protein]-C-terminal-Gly-aminoethanethioate + L-cysteinyl-[cysteine desulfurase] + A + AMP + 2 H(+). Its pathway is cofactor biosynthesis; thiamine diphosphate biosynthesis. Catalyzes the ATP-dependent transfer of a sulfur to tRNA to produce 4-thiouridine in position 8 of tRNAs, which functions as a near-UV photosensor. Also catalyzes the transfer of sulfur to the sulfur carrier protein ThiS, forming ThiS-thiocarboxylate. This is a step in the synthesis of thiazole, in the thiamine biosynthesis pathway. The sulfur is donated as persulfide by IscS. This is Probable tRNA sulfurtransferase from Streptococcus pyogenes serotype M3 (strain ATCC BAA-595 / MGAS315).